Here is a 420-residue protein sequence, read N- to C-terminus: Ribulose bisphosphate carboxylase large chain (420 aa).

Residues asparagine 103 and threonine 153 each coordinate substrate. The active-site Proton acceptor is the lysine 155. Lysine 157 lines the substrate pocket. Lysine 181, aspartate 183, and glutamate 184 together coordinate Mg(2+). Lysine 181 is subject to N6-carboxylysine. Catalysis depends on histidine 274, which acts as the Proton acceptor. Residues arginine 275, histidine 307, and serine 359 each contribute to the substrate site.

The protein belongs to the RuBisCO large chain family. Type I subfamily. Heterohexadecamer of 8 large chains and 8 small chains; disulfide-linked. The disulfide link is formed within the large subunit homodimers. Requires Mg(2+) as cofactor. In terms of processing, the disulfide bond which can form in the large chain dimeric partners within the hexadecamer appears to be associated with oxidative stress and protein turnover.

Its subcellular location is the plastid. It localises to the chloroplast. The catalysed reaction is 2 (2R)-3-phosphoglycerate + 2 H(+) = D-ribulose 1,5-bisphosphate + CO2 + H2O. The enzyme catalyses D-ribulose 1,5-bisphosphate + O2 = 2-phosphoglycolate + (2R)-3-phosphoglycerate + 2 H(+). RuBisCO catalyzes two reactions: the carboxylation of D-ribulose 1,5-bisphosphate, the primary event in carbon dioxide fixation, as well as the oxidative fragmentation of the pentose substrate in the photorespiration process. Both reactions occur simultaneously and in competition at the same active site. The polypeptide is Ribulose bisphosphate carboxylase large chain (Anemia mexicana (Mexican fern)).